The following is a 114-amino-acid chain: Protein ORF3 (114 aa).

2 hydrophobic regions span residues tryptophan 6–arginine 24 and alanine 33–leucine 53. The tract at residues valine 28–proline 68 is interaction with host HPX. The segment at valine 48–proline 72 is interaction with the capsid protein. Serine 71 carries the phosphoserine; by host modification. A homodimerization, and interaction with host AMBP/bikunin region spans residues proline 72–arginine 114. The interval serine 85–arginine 114 is disordered. The interval arginine 95–valine 104 is interaction with host SRC, HCK, FYN, PIK3R3 and GRB2. A PTAP/PSAP motif motif is present at residues proline 96 to proline 99.

This sequence belongs to the hepevirus ORF3 protein family. Forms homooligomers. Interacts with host SRC, HCK, FYN, PIK3R3 and GRB2 (via SH3 domain); binding does not activate the kinases. Interacts with host AMBP/bikunin and AMBP/alpha-1-microglobulin peptides. Interacts with host HPX/hemopexin. Interacts (when phosphorylated) with capsid protein ORF2. Interacts with host TSG101; this interaction plays a role in viral release from the host cell. Interacts with host SIRPA; this interaction down-regulates the phosphorylation of host IRF3. Post-translationally, palmitoylated in the N-terminus.

The protein localises to the host endoplasmic reticulum membrane. It localises to the host cytoplasm. It is found in the host cytoskeleton. The protein resides in the virion. Its subcellular location is the host cell membrane. Its function is as follows. Small multifunctional phosphoprotein involved in virion morphogenesis, egress and counteracting host innate immunity. Plays critical roles in the final steps of viral release by interacting with host TSG101, a member of the vacuolar protein-sorting pathway and using other cellular host proteins involved in vesicle formation pathway. Also acts as a viroporin and forms ion conductive pores allowing viral particle release. Impairs the generation of type I interferon by down-regulating host TLR3 and TLR7 as well as their downstream signaling pathways. Down-regulates the phosphorylation of host IRF3 via the interaction with host SIRP-alpha, thereby inhibiting IFN-I expression. Interacts with host microtubules. The protein is Protein ORF3 of Hepatitis E virus genotype 1 (isolate Human/India/Hyderabad) (HEV-1).